The primary structure comprises 184 residues: UPF0397 protein SAOUHSC_03020 (184 aa).

5 helical membrane-spanning segments follow: residues 11–31 (VVAIGIGAAVFVILGRFVVIP), 44–64 (AFLALISAIFGPFAGLMTGLV), 77–97 (AWWSWVICSGIIGCLYGWIGL), 116–136 (IGQIIANIICWALIAPTLDIL), and 148–168 (QGVISAVLNIISVGIIGTILL).

This sequence belongs to the UPF0397 family.

Its subcellular location is the cell membrane. The chain is UPF0397 protein SAOUHSC_03020 from Staphylococcus aureus (strain NCTC 8325 / PS 47).